Reading from the N-terminus, the 95-residue chain is RING finger protein Z (95 aa).

A lipid anchor (N-myristoyl glycine; by host) is attached at Gly-2. The RING-type; atypical zinc-finger motif lies at 38 to 74; sequence CKSCWFANKGLIKCSNHYLCLKCLTAMLSRSDYCGIC. A PTAP/PSAP motif motif is present at residues 88–91; that stretch reads PSAP.

This sequence belongs to the arenaviridae Z protein family. As to quaternary structure, interacts with protein NP; this interaction probably directs the encapsidated genome to budding sites. Interacts (via RING domain) with polymerase L; this interaction inhibits viral transcription and replication, Z partially blocks the product exit tunnel for the releasing nascent RNA product. Interacts with the glycoprotein complex; this interaction plays a role in virion budding. Interacts with host eIF4E; this interaction results in eIF4E reduced affinity for its substrate, the 5'-m7 G cap structure. Interacts (via late-budding domain) with host TSG101; this interaction is essential for budding and release of viral particles. Interacts with host RPLP0; this interaction may serve to load ribosome-like particles inside the virion. Interacts with host PML; this interaction induces PML bodies redistribution in the cytoplasm upon viral infection. Post-translationally, myristoylation is required for the role of RING finger protein Z in assembly and budding.

Its subcellular location is the virion. It localises to the host cytoplasm. The protein resides in the host perinuclear region. It is found in the host cell membrane. Its function is as follows. Plays a crucial role in virion assembly and budding. Expressed late in the virus life cycle, it acts as an inhibitor of viral transcription and RNA synthesis by interacting with the viral polymerase L. Presumably recruits the NP encapsidated genome to cellular membranes at budding sites via direct interaction with NP. Plays critical roles in the final steps of viral release by interacting with host TSG101, a member of the vacuolar protein-sorting pathway and using other cellular host proteins involved in vesicle formation pathway. The budding of the virus progeny occurs after association of protein Z with the viral glycoprotein complex SSP-GP1-GP2 at the cell periphery, step that requires myristoylation of protein Z. Also selectively represses protein production by associating with host eIF4E. In cell-based minigenome assay, has an inhibitory effect on the ribonucleoprotein machinery (vRNP), which is responsible for the replication and transcription of the viral genome. In Bear Canyon mammarenavirus (isolate Mouse/United States/AV A0070039/2000) (BCNV), this protein is RING finger protein Z.